A 218-amino-acid chain; its full sequence is Uracil-DNA glycosylase (218 aa).

Residue Asp-68 is the Proton acceptor of the active site.

Belongs to the uracil-DNA glycosylase (UDG) superfamily. UNG family. In terms of assembly, homodimer. Interacts with protein OPG148. Component of the Uracil-DNA glycosylase(UDG)-OPG148-polymerase complex; OPG148 and UDG form a heterodimeric processivity factor that associates with OPG71 to form the processive polymerase holoenzyme.

The catalysed reaction is Hydrolyzes single-stranded DNA or mismatched double-stranded DNA and polynucleotides, releasing free uracil.. In terms of biological role, plays an essential role in viral replication as a component of the DNA polymerase processivity factor. Excises uracil residues from the DNA which can arise as a result of misincorporation of dUMP residues by DNA polymerase or due to deamination of cytosine. The polypeptide is Uracil-DNA glycosylase (OPG116) (Variola virus).